A 433-amino-acid polypeptide reads, in one-letter code: MFNFAVSRESLLSGFQWFFFIFCNTVVVPPTLLSAFQLPQSSLLTLTQYAFLATALACFAQAFCGHRRAIMEGPGGLWWGTILTITLGEASRGTPINDIATSLAVGIALSGVLTMLIGFSGLGHRLARLFTPSVMVLFMLMLGAQLTTIFFKGMLGLPFGIADPNFKIQLPPFALSVAVMCLVLAMIIFLPQRFARYGLLVGTITGWLLWYFCFPSSHSLSGELHWQWFPLGSGGALSPGIILTAVITGLVNISNTYGAIRGTDVFYPQQGAGNTRYRRSFVATGFMTLITVPLAVIPFSPFVSSIGLLTQTGDYTRRSFIYGSVICLLVALVPALTRLFCSIPLPVSSAVMLVSYLPLLFSALVFSQQITFTARNIYRLALPLFVGIFLMALPPVYLQDLPLTLRPLLSNGLLVGILLAVLMDNLIPWERIE.

The Periplasmic portion of the chain corresponds to 1–17; the sequence is MFNFAVSRESLLSGFQW. Residues 18 to 38 traverse the membrane as a helical segment; sequence FFFIFCNTVVVPPTLLSAFQL. Residues 39-42 are Cytoplasmic-facing; the sequence is PQSS. The helical transmembrane segment at 43–63 threads the bilayer; sequence LLTLTQYAFLATALACFAQAF. Topologically, residues 64-68 are periplasmic; it reads CGHRR. The chain crosses the membrane as a helical span at residues 69–89; sequence AIMEGPGGLWWGTILTITLGE. Topologically, residues 90–102 are cytoplasmic; that stretch reads ASRGTPINDIATS. A helical membrane pass occupies residues 103-123; it reads LAVGIALSGVLTMLIGFSGLG. Residues 124-130 are Periplasmic-facing; sequence HRLARLF. The helical transmembrane segment at 131–151 threads the bilayer; the sequence is TPSVMVLFMLMLGAQLTTIFF. The Cytoplasmic portion of the chain corresponds to 152–169; that stretch reads KGMLGLPFGIADPNFKIQ. Residues 170-190 form a helical membrane-spanning segment; sequence LPPFALSVAVMCLVLAMIIFL. The Periplasmic segment spans residues 191-196; the sequence is PQRFAR. The helical transmembrane segment at 197-217 threads the bilayer; sequence YGLLVGTITGWLLWYFCFPSS. At 218 to 230 the chain is on the cytoplasmic side; the sequence is HSLSGELHWQWFP. A helical membrane pass occupies residues 231 to 251; that stretch reads LGSGGALSPGIILTAVITGLV. Over 252-288 the chain is Periplasmic; that stretch reads NISNTYGAIRGTDVFYPQQGAGNTRYRRSFVATGFMT. A helical membrane pass occupies residues 289–309; sequence LITVPLAVIPFSPFVSSIGLL. At 310–319 the chain is on the cytoplasmic side; the sequence is TQTGDYTRRS. The chain crosses the membrane as a helical span at residues 320–340; it reads FIYGSVICLLVALVPALTRLF. The Periplasmic portion of the chain corresponds to 341 to 345; it reads CSIPL. Residues 346–366 traverse the membrane as a helical segment; the sequence is PVSSAVMLVSYLPLLFSALVF. The Cytoplasmic segment spans residues 367 to 379; it reads SQQITFTARNIYR. A helical membrane pass occupies residues 380-400; sequence LALPLFVGIFLMALPPVYLQD. At 401–407 the chain is on the periplasmic side; it reads LPLTLRP. The helical transmembrane segment at 408–428 threads the bilayer; the sequence is LLSNGLLVGILLAVLMDNLIP. Residues 429-433 lie on the Cytoplasmic side of the membrane; that stretch reads WERIE.

It belongs to the nucleobase:cation symporter-2 (NCS2) (TC 2.A.40) family.

It localises to the cell inner membrane. The sequence is that of Putative purine permease YbbY (ybbY) from Escherichia coli (strain K12).